The chain runs to 335 residues: DNA-directed RNA polymerase subunit alpha (335 aa).

The interval 1 to 233 (MVREKIRVST…DLLIPFLHAE (233 aa)) is alpha N-terminal domain (alpha-NTD). The tract at residues 263–335 (KKKIALKFIF…HFVIDLKNKR (73 aa)) is alpha C-terminal domain (alpha-CTD).

Belongs to the RNA polymerase alpha chain family. As to quaternary structure, in plastids the minimal PEP RNA polymerase catalytic core is composed of four subunits: alpha, beta, beta', and beta''. When a (nuclear-encoded) sigma factor is associated with the core the holoenzyme is formed, which can initiate transcription.

It localises to the plastid. Its subcellular location is the chloroplast. The catalysed reaction is RNA(n) + a ribonucleoside 5'-triphosphate = RNA(n+1) + diphosphate. Its function is as follows. DNA-dependent RNA polymerase catalyzes the transcription of DNA into RNA using the four ribonucleoside triphosphates as substrates. The protein is DNA-directed RNA polymerase subunit alpha of Spinacia oleracea (Spinach).